A 118-amino-acid chain; its full sequence is Large ribosomal subunit protein uL24 (118 aa).

The protein belongs to the universal ribosomal protein uL24 family. In terms of assembly, part of the 50S ribosomal subunit.

Functionally, one of two assembly initiator proteins, it binds directly to the 5'-end of the 23S rRNA, where it nucleates assembly of the 50S subunit. Its function is as follows. One of the proteins that surrounds the polypeptide exit tunnel on the outside of the subunit. The protein is Large ribosomal subunit protein uL24 of Prochlorococcus marinus (strain NATL1A).